Here is a 167-residue protein sequence, read N- to C-terminus: Modulator of smoothened protein (167 aa).

4 helical membrane-spanning segments follow: residues 7–29 (ISGCLFLAADIFAIASIANPDWI), 68–88 (TLFFIILGIVSLTITCGLLVI), 101–121 (WIAFMGMVLFCMAALIFPVGF), and 139–159 (VGSSYVLFVLSIFFTIVGLLF).

It is found in the cell projection. The protein resides in the cilium membrane. Its subcellular location is the cell membrane. Its function is as follows. Acts as a negative regulator of hedgehog signaling probably by promoting internalization and subsequent degradation of smoothened protein (SMO) present in the ciliary membrane. Plays a role in sonic hedgehog (SHH)-induced spinal neural progenitor cells differentiation. The protein is Modulator of smoothened protein of Danio rerio (Zebrafish).